Here is a 203-residue protein sequence, read N- to C-terminus: Small ribosomal subunit protein uS4 (203 aa).

The disordered stretch occupies residues 22-45 (TGKELARRPYKPGQHGPNSRGKVS). The 64-residue stretch at 93 to 156 (QRLDNVVYRL…QNISTIKEAV (64 aa)) folds into the S4 RNA-binding domain.

This sequence belongs to the universal ribosomal protein uS4 family. In terms of assembly, part of the 30S ribosomal subunit. Contacts protein S5. The interaction surface between S4 and S5 is involved in control of translational fidelity.

Functionally, one of the primary rRNA binding proteins, it binds directly to 16S rRNA where it nucleates assembly of the body of the 30S subunit. With S5 and S12 plays an important role in translational accuracy. The polypeptide is Small ribosomal subunit protein uS4 (Enterococcus faecalis (strain ATCC 700802 / V583)).